The primary structure comprises 195 residues: Probable GTP-binding protein EngB (195 aa).

Residues 22–194 (LKGEVAFVGR…LDLISTLLKE (173 aa)) form the EngB-type G domain. GTP is bound by residues 30–37 (GRSNVGKS), 56–60 (GKTRS), 74–77 (DLPG), 141–144 (TKMD), and 173–175 (TSS). 2 residues coordinate Mg(2+): Ser-37 and Thr-58.

The protein belongs to the TRAFAC class TrmE-Era-EngA-EngB-Septin-like GTPase superfamily. EngB GTPase family. Requires Mg(2+) as cofactor.

Necessary for normal cell division and for the maintenance of normal septation. The protein is Probable GTP-binding protein EngB of Thermotoga sp. (strain RQ2).